The primary structure comprises 209 residues: MSKQKHSASSSRWLKEHFDDKYANEARRKGYRSRAIFKLEEIQQKDKLLKPGMTVVDLGAAPGGWSQYAIGVVGDSGRVIACDILPMDSIAGVSFLQGDFREDAVLEALLERIQPDMVDVVMSDMAPNIAGNNSVDQPRAMYLVELALDMCRQVLAPNGSFVVKVFQGEGFDEYVKEVRNMFKVVKIRKPDSSRARSREVFVVATGYKG.

Residues Gly-63, Trp-65, Asp-83, Asp-99, and Asp-124 each contribute to the S-adenosyl-L-methionine site. Lys-164 functions as the Proton acceptor in the catalytic mechanism.

Belongs to the class I-like SAM-binding methyltransferase superfamily. RNA methyltransferase RlmE family.

The protein localises to the cytoplasm. The catalysed reaction is uridine(2552) in 23S rRNA + S-adenosyl-L-methionine = 2'-O-methyluridine(2552) in 23S rRNA + S-adenosyl-L-homocysteine + H(+). Functionally, specifically methylates the uridine in position 2552 of 23S rRNA at the 2'-O position of the ribose in the fully assembled 50S ribosomal subunit. The sequence is that of Ribosomal RNA large subunit methyltransferase E from Vibrio vulnificus (strain CMCP6).